Reading from the N-terminus, the 148-residue chain is MTDKEQVVIYTDGACKGNPGRGGWGALLLYKGAERELWGGEPDTTNNRMELMAAIQALAALKRSCPIRLITDSEYVMRGITEWLPNWKKRGWKTASKQPVKNADLWQALDEQVARHQVEWQWVRGHTGDPGNERADQLANRGVAELPR.

One can recognise an RNase H type-1 domain in the interval 3 to 144; the sequence is DKEQVVIYTD…ADQLANRGVA (142 aa). Residues aspartate 12, glutamate 50, aspartate 72, and aspartate 136 each coordinate Mg(2+). A disordered region spans residues 125–148; it reads GHTGDPGNERADQLANRGVAELPR.

This sequence belongs to the RNase H family. Monomer. Requires Mg(2+) as cofactor.

It is found in the cytoplasm. It catalyses the reaction Endonucleolytic cleavage to 5'-phosphomonoester.. Its function is as follows. Endonuclease that specifically degrades the RNA of RNA-DNA hybrids. The protein is Ribonuclease H of Pseudomonas aeruginosa (strain LESB58).